A 539-amino-acid chain; its full sequence is O-phosphoserine--tRNA(Cys) ligase (539 aa).

Substrate contacts are provided by residues 188–190, 233–235, 275–276, and asparagine 327; these read HMT, SAS, and YY.

This sequence belongs to the class-II aminoacyl-tRNA synthetase family. O-phosphoseryl-tRNA(Cys) synthetase subfamily. Homotetramer. Interacts with SepCysS.

It catalyses the reaction tRNA(Cys) + O-phospho-L-serine + ATP = O-phospho-L-seryl-tRNA(Cys) + AMP + diphosphate. Functionally, catalyzes the attachment of O-phosphoserine (Sep) to tRNA(Cys). This chain is O-phosphoserine--tRNA(Cys) ligase, found in Methanosarcina acetivorans (strain ATCC 35395 / DSM 2834 / JCM 12185 / C2A).